The following is a 330-amino-acid chain: Probable inactive heme oxygenase 2, chloroplastic (330 aa).

Composition is skewed to low complexity over residues 1–13 (MPLA…SAVV) and 56–69 (AAEA…VDEA). 3 disordered regions span residues 1–27 (MPLA…RARP), 50–82 (PSPP…YPRQ), and 107–156 (TTLK…LEGE). The N-terminal 47 residues, 1–47 (MPLAAAVAASAVVPPRPPPPPPRRARPLRSFTGLILTRDLAALTVAR), are a transit peptide targeting the chloroplast. Acidic residues predominate over residues 114-151 (TGAEEEVGDGVSEDASASEEEEEEEDDDDVVEEEEEGA).

The protein belongs to the heme oxygenase family.

Its subcellular location is the plastid. The protein resides in the chloroplast. In terms of biological role, probable inactive heme oxygenase that may play a role in the regulation of phytochrome assembly and photomorphogenesis. The sequence is that of Probable inactive heme oxygenase 2, chloroplastic (HO2) from Oryza sativa subsp. japonica (Rice).